The primary structure comprises 565 residues: NAD-dependent malic enzyme (565 aa).

Tyrosine 104 acts as the Proton donor in catalysis. An NAD(+)-binding site is contributed by arginine 157. Lysine 175 serves as the catalytic Proton acceptor. Residues glutamate 246, aspartate 247, and aspartate 270 each contribute to the a divalent metal cation site. NAD(+)-binding residues include aspartate 270 and asparagine 418.

It belongs to the malic enzymes family. In terms of assembly, homotetramer. The cofactor is Mg(2+). Requires Mn(2+) as cofactor.

It catalyses the reaction (S)-malate + NAD(+) = pyruvate + CO2 + NADH. The enzyme catalyses oxaloacetate + H(+) = pyruvate + CO2. This Klebsiella pneumoniae (strain 342) protein is NAD-dependent malic enzyme.